The following is a 356-amino-acid chain: uncharacterized protein (356 aa).

It is found in the cytoplasm. The protein localises to the nucleus. This is an uncharacterized protein from Saccharomyces cerevisiae (strain ATCC 204508 / S288c) (Baker's yeast).